A 334-amino-acid polypeptide reads, in one-letter code: NmrA-like family domain-containing oxidoreductase lnaB (334 aa).

NADP(+)-binding positions include 12–17, 38–42, 59–60, 80–82, K138, and 162–165; these read GGTGKQ, RNAQS, DG, INS, and FLEN.

This sequence belongs to the NmrA-type oxidoreductase family.

It participates in secondary metabolite biosynthesis. NmrA-like family domain-containing oxidoreductase; part of the lna gene cluster that mediates the biosynthesis of diastereomeric piperazines. Lna and lnb clusters encode sets of enzymes that produce overlapping sets of previously undescribed metabolites such as piperazinomycin-like metabolites or morpholine. The lna and lnb biosynthetic pathways appear to be part of a signaling network that controls the formation of sclerotia, a resilient overwintering structure. One primary function of the non-canonical nonribosomal peptide synthetases lnaA and lnbA consists in the reduction of L-tyrosine. The presence in the clusters of tailoring enzymes such as the oxidoreductases lnaB, lnbB, lnaE or lnbE, as well as of the cytochrome P450 monooxygenases lnaC, lnaD, or lnbC, might explain formation of various diastereomeric piperazines. The polypeptide is NmrA-like family domain-containing oxidoreductase lnaB (Aspergillus flavus (strain ATCC 200026 / FGSC A1120 / IAM 13836 / NRRL 3357 / JCM 12722 / SRRC 167)).